Consider the following 240-residue polypeptide: MTNGTIHNKDGFLNRIAERLGRNRRSAGVTVPDYIHQPQHRVYQGYTQDELVGVLKDHCRKIHTELIETDVIGLHDALYEQAARFGGGPVMIPKDDRFKEYGLSGLLTDKWPNEGTKVWEWDAAAGDENIQRAEQANIGVTFSEITLAESGTVVLFSSKDKGRSVSLLPTTYIAIVPKSTIVPRMTQASAIIKQKIADGDVIPSCINYVTGPSNSADIEMDLVVGVHGPVKAAYIVVEDR.

The protein belongs to the LutC/YkgG family.

In terms of biological role, is involved in L-lactate degradation and allows cells to grow with lactate as the sole carbon source. This is Lactate utilization protein C from Bacillus licheniformis (strain ATCC 14580 / DSM 13 / JCM 2505 / CCUG 7422 / NBRC 12200 / NCIMB 9375 / NCTC 10341 / NRRL NRS-1264 / Gibson 46).